The following is an 874-amino-acid chain: Bifunctional uridylyltransferase/uridylyl-removing enzyme (874 aa).

The uridylyltransferase stretch occupies residues 1-332; that stretch reads MTLQSPLTFR…NGGASEDAEI (332 aa). The interval 333-692 is uridylyl-removing; that stretch reads IDEDFQRRGA…ISKKATRGGT (360 aa). The HD domain occupies 451–573; it reads VDEHSIRLLK…VRDEEYLEYL (123 aa). ACT domains lie at 693–777 and 800–874; these read EVFV…RTPN and LMEF…SVSA.

Belongs to the GlnD family. Requires Mg(2+) as cofactor.

The catalysed reaction is [protein-PII]-L-tyrosine + UTP = [protein-PII]-uridylyl-L-tyrosine + diphosphate. It carries out the reaction [protein-PII]-uridylyl-L-tyrosine + H2O = [protein-PII]-L-tyrosine + UMP + H(+). With respect to regulation, uridylyltransferase (UTase) activity is inhibited by glutamine, while glutamine activates uridylyl-removing (UR) activity. In terms of biological role, modifies, by uridylylation and deuridylylation, the PII regulatory proteins (GlnB and homologs), in response to the nitrogen status of the cell that GlnD senses through the glutamine level. Under low glutamine levels, catalyzes the conversion of the PII proteins and UTP to PII-UMP and PPi, while under higher glutamine levels, GlnD hydrolyzes PII-UMP to PII and UMP (deuridylylation). Thus, controls uridylylation state and activity of the PII proteins, and plays an important role in the regulation of nitrogen assimilation and metabolism. The chain is Bifunctional uridylyltransferase/uridylyl-removing enzyme from Vibrio campbellii (strain ATCC BAA-1116).